Reading from the N-terminus, the 735-residue chain is Catalase-peroxidase (735 aa).

2 stretches are compositionally biased toward polar residues: residues 1–10 and 17–26; these read MENQNRQNAA and SVTNQSSNRT. Positions 1 to 30 are disordered; the sequence is MENQNRQNAAQCPFHGSVTNQSSNRTTNKD. The tryptophyl-tyrosyl-methioninium (Trp-Tyr) (with M-249) cross-link spans 100 to 223; sequence WHSAGTYRIG…LAAVQMGLIY (124 aa). H101 serves as the catalytic Proton acceptor. Positions 223–249 form a cross-link, tryptophyl-tyrosyl-methioninium (Tyr-Met) (with W-100); sequence YVNPEGPDGKPDPKAAARDIRETFRRM. H264 is a binding site for heme b.

Belongs to the peroxidase family. Peroxidase/catalase subfamily. In terms of assembly, homodimer or homotetramer. Heme b is required as a cofactor. Post-translationally, formation of the three residue Trp-Tyr-Met cross-link is important for the catalase, but not the peroxidase activity of the enzyme.

The catalysed reaction is H2O2 + AH2 = A + 2 H2O. It catalyses the reaction 2 H2O2 = O2 + 2 H2O. Bifunctional enzyme with both catalase and broad-spectrum peroxidase activity. Also displays NADH oxidase, INH lyase and isonicotinoyl-NAD synthase activities. The chain is Catalase-peroxidase from Geobacillus stearothermophilus (Bacillus stearothermophilus).